The chain runs to 297 residues: Thiosulfate sulfurtransferase (297 aa).

The residue at position 14 (K14) is an N6-acetyllysine; alternate. K14 carries the post-translational modification N6-succinyllysine; alternate. One can recognise a Rhodanese 1 domain in the interval 25 to 143 (LGPGLRVLDA…WLKEGHPVTS (119 aa)). An O-linked (GlcNAc) serine glycan is attached at S35. Residue S38 is modified to Phosphoserine. K136 is modified (N6-acetyllysine; alternate). Residue K136 is modified to N6-succinyllysine; alternate. A hinge region spans residues 144–159 (EPSRPEPAVFKATLDR). K163 carries the post-translational modification N6-acetyllysine. One can recognise a Rhodanese 2 domain in the interval 173–288 (QSKRFQLVDS…WFHQAPPETR (116 aa)). An N6-acetyllysine; alternate modification is found at K175. The residue at position 175 (K175) is an N6-succinyllysine; alternate. R187 is a substrate binding site. The residue at position 224 (K224) is an N6-acetyllysine; alternate. K224 carries the N6-succinyllysine; alternate modification. The residue at position 236 (K236) is an N6-acetyllysine. K237 bears the N6-acetyllysine; alternate mark. K237 carries the post-translational modification N6-succinyllysine; alternate. The Cysteine persulfide intermediate role is filled by C248. Residue K250 participates in substrate binding.

In terms of assembly, monomer.

The protein localises to the mitochondrion matrix. It carries out the reaction thiosulfate + hydrogen cyanide = thiocyanate + sulfite + 2 H(+). Its function is as follows. Together with MRPL18, acts as a mitochondrial import factor for the cytosolic 5S rRNA. Only the nascent unfolded cytoplasmic form is able to bind to the 5S rRNA. Formation of iron-sulfur complexes and cyanide detoxification. Binds molecular oxygen and sulfur. The sequence is that of Thiosulfate sulfurtransferase (TST) from Cricetulus griseus (Chinese hamster).